Reading from the N-terminus, the 406-residue chain is Succinyl-diaminopimelate desuccinylase (406 aa).

Residue His-95 participates in Zn(2+) binding. Asp-97 is an active-site residue. A Zn(2+)-binding site is contributed by Asp-128. Catalysis depends on Glu-162, which acts as the Proton acceptor. 3 residues coordinate Zn(2+): Glu-163, Glu-191, and His-377.

Belongs to the peptidase M20A family. DapE subfamily. Homodimer. Zn(2+) serves as cofactor. Co(2+) is required as a cofactor.

It carries out the reaction N-succinyl-(2S,6S)-2,6-diaminopimelate + H2O = (2S,6S)-2,6-diaminopimelate + succinate. Its pathway is amino-acid biosynthesis; L-lysine biosynthesis via DAP pathway; LL-2,6-diaminopimelate from (S)-tetrahydrodipicolinate (succinylase route): step 3/3. Its function is as follows. Catalyzes the hydrolysis of N-succinyl-L,L-diaminopimelic acid (SDAP), forming succinate and LL-2,6-diaminopimelate (DAP), an intermediate involved in the bacterial biosynthesis of lysine and meso-diaminopimelic acid, an essential component of bacterial cell walls. This chain is Succinyl-diaminopimelate desuccinylase, found in Polaromonas naphthalenivorans (strain CJ2).